Reading from the N-terminus, the 297-residue chain is uncharacterized protein (297 aa).

Over residues 1-12 (MASYSFQFSTDA) the composition is skewed to polar residues. The interval 1 to 21 (MASYSFQFSTDATGKPGAAKP) is disordered.

The protein to B.subtilis XkdY/XepA.

This is an uncharacterized protein from Bacillus subtilis (strain 168).